The following is a 455-amino-acid chain: Bifunctional protein GlmU (455 aa).

The pyrophosphorylase stretch occupies residues 1 to 225 (MEVVILAAGQ…IWETLGVNSK (225 aa)). UDP-N-acetyl-alpha-D-glucosamine contacts are provided by residues 6 to 9 (LAAG), Lys-20, Gln-71, 76 to 77 (GT), 98 to 100 (YGD), Gly-135, Glu-150, Asn-165, and Asn-223. Position 100 (Asp-100) interacts with Mg(2+). Residue Asn-223 participates in Mg(2+) binding. Residues 226-246 (AQLAELERLHQRNIATRLMED) are linker. Positions 247–455 (GVTLFDPSRI…KRPVKKKAGE (209 aa)) are N-acetyltransferase. Arg-329 and Lys-347 together coordinate UDP-N-acetyl-alpha-D-glucosamine. The active-site Proton acceptor is His-359. Residues Tyr-362 and Asn-373 each coordinate UDP-N-acetyl-alpha-D-glucosamine. Residues Ala-376, 382-383 (NY), Ser-401, Ala-419, and Arg-436 each bind acetyl-CoA.

In the N-terminal section; belongs to the N-acetylglucosamine-1-phosphate uridyltransferase family. It in the C-terminal section; belongs to the transferase hexapeptide repeat family. In terms of assembly, homotrimer. Mg(2+) is required as a cofactor.

Its subcellular location is the cytoplasm. The catalysed reaction is alpha-D-glucosamine 1-phosphate + acetyl-CoA = N-acetyl-alpha-D-glucosamine 1-phosphate + CoA + H(+). It carries out the reaction N-acetyl-alpha-D-glucosamine 1-phosphate + UTP + H(+) = UDP-N-acetyl-alpha-D-glucosamine + diphosphate. It participates in nucleotide-sugar biosynthesis; UDP-N-acetyl-alpha-D-glucosamine biosynthesis; N-acetyl-alpha-D-glucosamine 1-phosphate from alpha-D-glucosamine 6-phosphate (route II): step 2/2. The protein operates within nucleotide-sugar biosynthesis; UDP-N-acetyl-alpha-D-glucosamine biosynthesis; UDP-N-acetyl-alpha-D-glucosamine from N-acetyl-alpha-D-glucosamine 1-phosphate: step 1/1. Its pathway is bacterial outer membrane biogenesis; LPS lipid A biosynthesis. Functionally, catalyzes the last two sequential reactions in the de novo biosynthetic pathway for UDP-N-acetylglucosamine (UDP-GlcNAc). The C-terminal domain catalyzes the transfer of acetyl group from acetyl coenzyme A to glucosamine-1-phosphate (GlcN-1-P) to produce N-acetylglucosamine-1-phosphate (GlcNAc-1-P), which is converted into UDP-GlcNAc by the transfer of uridine 5-monophosphate (from uridine 5-triphosphate), a reaction catalyzed by the N-terminal domain. The sequence is that of Bifunctional protein GlmU from Aromatoleum aromaticum (strain DSM 19018 / LMG 30748 / EbN1) (Azoarcus sp. (strain EbN1)).